A 65-amino-acid polypeptide reads, in one-letter code: Large ribosomal subunit protein bL35 (65 aa).

This sequence belongs to the bacterial ribosomal protein bL35 family.

The sequence is that of Large ribosomal subunit protein bL35 from Methylobacillus flagellatus (strain ATCC 51484 / DSM 6875 / VKM B-1610 / KT).